We begin with the raw amino-acid sequence, 153 residues long: Transcriptional repressor NrdR (153 aa).

The segment at 3-34 is a zinc-finger region; the sequence is CPSCFHNGTRVLDSRPVDEGRSIRRRRECESC. The ATP-cone domain maps to 49–139; that stretch reads LIVVKKEGTR…VYRQFKDLNV (91 aa).

Belongs to the NrdR family. Zn(2+) serves as cofactor.

In terms of biological role, negatively regulates transcription of bacterial ribonucleotide reductase nrd genes and operons by binding to NrdR-boxes. In Bacillus mycoides (strain KBAB4) (Bacillus weihenstephanensis), this protein is Transcriptional repressor NrdR.